We begin with the raw amino-acid sequence, 491 residues long: MFKLAKIMIQGTGSSVGKSILVTALCRIFKQDGYTVCPYKSQNMALNSYITYDGKEMGRAQVLQAHAAGLEPEAYMNPILLKPTGDKKCQIIFNGEVYGNSTAMEYHNMKTKFGEKLKDQFKNIEEKFDIVVIEGAGSPAEINLRDKDIVNMGFAEMVDAPVLLAGDIDRGGVFASLAGTMLLLTEEERNRVKGTIINKFRGDIEILKPGLKMLEDIIKIPTVGVVPYLKFQLEDEDGAIDFNRNINAPIDIAVIKLPRISNFTDFDALKVEEDVSIRYITSKEDFGKPDLLIVPGSKNTIEDLLALRKCGLEEKIKEYSKTGTIIGICGGYQMLGKTLKDPYKVESEELETQGMGLLNVDTVFEKEKVTTRVKANSEDTEVYGYEIHMGICNYKEGAKPLFNIYDENGKKVNRNDGAINEKGNVMGTYIHGVFDGVEFREKVLNNIRKSKNMEERNAINYENLREKNLDMLADLVRENIDMDYIYKIIGM.

The GATase cobBQ-type domain maps to 249-439; that stretch reads PIDIAVIKLP…IHGVFDGVEF (191 aa). Catalysis depends on C329, which acts as the Nucleophile. H431 is an active-site residue.

This sequence belongs to the CobB/CobQ family. CobQ subfamily.

Its pathway is cofactor biosynthesis; adenosylcobalamin biosynthesis. In terms of biological role, catalyzes amidations at positions B, D, E, and G on adenosylcobyrinic A,C-diamide. NH(2) groups are provided by glutamine, and one molecule of ATP is hydrogenolyzed for each amidation. This Clostridium tetani (strain Massachusetts / E88) protein is Cobyric acid synthase.